A 629-amino-acid chain; its full sequence is Arginine--tRNA ligase (629 aa).

The 'HIGH' region motif lies at 128–138 (VNPTKPLHMGH).

It belongs to the class-I aminoacyl-tRNA synthetase family.

It localises to the cytoplasm. The catalysed reaction is tRNA(Arg) + L-arginine + ATP = L-arginyl-tRNA(Arg) + AMP + diphosphate. The protein is Arginine--tRNA ligase (argS) of Pyrococcus horikoshii (strain ATCC 700860 / DSM 12428 / JCM 9974 / NBRC 100139 / OT-3).